The following is a 125-amino-acid chain: Fluoride-specific ion channel FluC (125 aa).

4 helical membrane-spanning segments follow: residues 2–22 (WLSI…RTGF), 35–55 (LGTL…LAFF), 68–88 (LIIT…AEVV), and 98–118 (WALG…LLGI). Residues Gly-75 and Thr-78 each contribute to the Na(+) site.

It belongs to the fluoride channel Fluc/FEX (TC 1.A.43) family.

Its subcellular location is the cell inner membrane. The catalysed reaction is fluoride(in) = fluoride(out). With respect to regulation, na(+) is not transported, but it plays an essential structural role and its presence is essential for fluoride channel function. In terms of biological role, fluoride-specific ion channel. Important for reducing fluoride concentration in the cell, thus reducing its toxicity. In Polynucleobacter asymbioticus (strain DSM 18221 / CIP 109841 / QLW-P1DMWA-1) (Polynucleobacter necessarius subsp. asymbioticus), this protein is Fluoride-specific ion channel FluC.